Here is a 206-residue protein sequence, read N- to C-terminus: Ribosomal RNA large subunit methyltransferase E (206 aa).

Gly60, Trp62, Asp80, Asp96, and Asp121 together coordinate S-adenosyl-L-methionine. Catalysis depends on Lys161, which acts as the Proton acceptor.

This sequence belongs to the class I-like SAM-binding methyltransferase superfamily. RNA methyltransferase RlmE family.

It localises to the cytoplasm. The enzyme catalyses uridine(2552) in 23S rRNA + S-adenosyl-L-methionine = 2'-O-methyluridine(2552) in 23S rRNA + S-adenosyl-L-homocysteine + H(+). Specifically methylates the uridine in position 2552 of 23S rRNA at the 2'-O position of the ribose in the fully assembled 50S ribosomal subunit. The chain is Ribosomal RNA large subunit methyltransferase E from Nitrosospira multiformis (strain ATCC 25196 / NCIMB 11849 / C 71).